A 276-amino-acid chain; its full sequence is Lyso-ornithine lipid O-acyltransferase (276 aa).

A helical membrane pass occupies residues 25–47; the sequence is LALRGGAMALVLMAGLTLHLAVR.

Belongs to the 1-acyl-sn-glycerol-3-phosphate acyltransferase family. OlsA subfamily.

The protein resides in the membrane. It catalyses the reaction a lyso-ornithine lipid + a fatty acyl-[ACP] = an N(2)-[(3R)-3-(acyloxy)acyl]-L-ornithine lipid + holo-[ACP]. It carries out the reaction a fatty acyl-[ACP] + a 1-acyl-sn-glycero-3-phosphate = a 1,2-diacyl-sn-glycero-3-phosphate + holo-[ACP]. It participates in lipid metabolism. Its pathway is phospholipid metabolism. Its function is as follows. Catalyzes the second step in the formation of ornithine lipids, which are phosphorus-free membrane lipids. Uses acyl-acyl carrier protein (acyl-AcpP) as an acyl donor and converts lyso-ornithine lipid (LOL) into ornithine lipid (OL). It can also act as an alternate acyl-sn-glycerol-3-phosphate acyltransferase (AGPAT) to ensure glycerophospholipid production. The sequence is that of Lyso-ornithine lipid O-acyltransferase from Rhodobacter capsulatus (strain ATCC BAA-309 / NBRC 16581 / SB1003).